Consider the following 1883-residue polypeptide: Transmembrane protein 131 (1883 aa).

The N-terminal stretch at 1–22 (MGKRAGGGATGATTAAVSTSAG) is a signal peptide. At 23-1117 (AGLEPAAARS…AEALPRPNWE (1095 aa)) the chain is on the lumenal side. The papD-L domain stretch occupies residues 109–283 (RFEPPMLDFH…ETKGVMRASF (175 aa)). N-linked (GlcNAc...) asparagine glycosylation is present at Asn-300. The residue at position 803 (Ser-803) is a Phosphoserine. Residues 1118-1138 (LALYIIISGIMSALFLLVIGT) traverse the membrane as a helical segment. Over 1139 to 1883 (AYLEAQGIWE…WSNSHFPHEN (745 aa)) the chain is Cytoplasmic. Disordered stretches follow at residues 1198-1580 (GAGG…DSLY), 1593-1656 (LKQR…KNGN), 1670-1712 (PGGN…PVSN), 1766-1789 (WESP…HTAT), and 1832-1858 (MGTE…TYNP). The span at 1237 to 1261 (AKNSSSTSSRTSAQAASSQSANKTS) shows a compositional bias: low complexity. Residues 1302–1316 (PQPPLPPPVPQPQEP) show a composition bias toward pro residues. Phosphoserine occurs at positions 1322 and 1342. Composition is skewed to basic and acidic residues over residues 1330–1343 (SHPE…HSSE) and 1353–1364 (AMDKDFDHHDSP). Ser-1375 carries the phosphoserine modification. Basic residues predominate over residues 1380–1394 (SKGKGKPLQRKVKPP). Over residues 1395-1417 (KKQEEKEKKGKGKPQEDELKDSL) the composition is skewed to basic and acidic residues. Residues 1423 to 1434 (SSTTTETSNPDT) show a composition bias toward low complexity. The segment covering 1436–1458 (PLLKEDTEKQKGKQAMPEKHESE) has biased composition (basic and acidic residues). 2 stretches are compositionally biased toward polar residues: residues 1510–1526 (AMTS…TKGT) and 1542–1553 (PNSQELGNTSSS). Residues 1602–1611 (PASPSPPAAP) show a composition bias toward pro residues. Over residues 1619–1630 (SYSSIVNSSSSS) the composition is skewed to low complexity. The segment covering 1678-1690 (VSSNKTGFSSSLG) has biased composition (polar residues). Low complexity-rich tracts occupy residues 1773–1784 (PSPSWPASSGSP) and 1837–1849 (SPAP…SSPA). Ser-1863 and Ser-1871 each carry phosphoserine.

Belongs to the TMEM131 family. Interacts (via PapD-L domain) with COL1A2 (via C-terminus); the interaction is direct, may occur with other collagen proteins, and is involved in assembly and TRAPPIII ER-to-Golgi transport complex-dependent secretion of collagen. Interacts (via C-terminus) with TRAPPC8 (via C-terminus); the interaction is direct.

It is found in the membrane. Functionally, collagen binding transmembrane protein involved in collagen secretion by recruiting the ER-to-Golgi transport complex TRAPPIII. May play a role in the immune response to viral infection. The chain is Transmembrane protein 131 from Homo sapiens (Human).